A 481-amino-acid chain; its full sequence is 3-isopropylmalate dehydratase large subunit (481 aa).

Residues Cys363, Cys423, and Cys426 each coordinate [4Fe-4S] cluster. The interval 437–463 (GQRAASTSNRNFEGRQGRGGRTHLVSP) is disordered.

It belongs to the aconitase/IPM isomerase family. LeuC type 1 subfamily. As to quaternary structure, heterodimer of LeuC and LeuD. Requires [4Fe-4S] cluster as cofactor.

It carries out the reaction (2R,3S)-3-isopropylmalate = (2S)-2-isopropylmalate. It functions in the pathway amino-acid biosynthesis; L-leucine biosynthesis; L-leucine from 3-methyl-2-oxobutanoate: step 2/4. In terms of biological role, catalyzes the isomerization between 2-isopropylmalate and 3-isopropylmalate, via the formation of 2-isopropylmaleate. The polypeptide is 3-isopropylmalate dehydratase large subunit (Salinispora arenicola (strain CNS-205)).